Reading from the N-terminus, the 458-residue chain is Alpha-1,3/1,6-mannosyltransferase ALG2 (458 aa).

Asn-57 and Asn-169 each carry an N-linked (GlcNAc...) asparagine glycan. Residues 438-458 (NISIIYVVSIIFAVLLKVFVF) form a helical membrane-spanning segment.

It belongs to the glycosyltransferase group 1 family.

Its subcellular location is the endoplasmic reticulum membrane. The enzyme catalyses a beta-D-Man-(1-&gt;4)-beta-D-GlcNAc-(1-&gt;4)-alpha-D-GlcNAc-diphospho-di-trans,poly-cis-dolichol + GDP-alpha-D-mannose = an alpha-D-Man-(1-&gt;3)-beta-D-Man-(1-&gt;4)-beta-D-GlcNAc-(1-&gt;4)-alpha-D-GlcNAc-diphospho-di-trans,poly-cis-dolichol + GDP + H(+). The catalysed reaction is an alpha-D-Man-(1-&gt;3)-beta-D-Man-(1-&gt;4)-beta-D-GlcNAc-(1-&gt;4)-alpha-D-GlcNAc-diphospho-di-trans,poly-cis-dolichol + GDP-alpha-D-mannose = an alpha-D-Man-(1-&gt;3)-[alpha-D-Man-(1-&gt;6)]-beta-D-Man-(1-&gt;4)-beta-D-GlcNAc-(1-&gt;4)-alpha-D-GlcNAc-diphospho-di-trans,poly-cis-dolichol + GDP + H(+). The protein operates within protein modification; protein glycosylation. In terms of biological role, mannosylates Man(2)GlcNAc(2)-dolichol diphosphate and Man(1)GlcNAc(2)-dolichol diphosphate to form Man(3)GlcNAc(2)-dolichol diphosphate. The chain is Alpha-1,3/1,6-mannosyltransferase ALG2 (ALG2) from Candida glabrata (strain ATCC 2001 / BCRC 20586 / JCM 3761 / NBRC 0622 / NRRL Y-65 / CBS 138) (Yeast).